A 204-amino-acid polypeptide reads, in one-letter code: Large ribosomal subunit protein eL15y (204 aa).

Belongs to the eukaryotic ribosomal protein eL15 family.

The polypeptide is Large ribosomal subunit protein eL15y (SB62) (Picea mariana (Black spruce)).